The chain runs to 956 residues: ATPase 11, plasma membrane-type (956 aa).

At 1-65 the chain is on the cytoplasmic side; the sequence is MGDKEEVLEA…EKKESKFLKF (65 aa). A helical transmembrane segment spans residues 66–85; sequence LGFMWNPLSWVMEAAAIMAI. Over 86 to 97 the chain is Extracellular; the sequence is ALANGGGKPPDW. A helical transmembrane segment spans residues 98-118; the sequence is QDFVGIITLLVINSTISFIEE. At 119-247 the chain is on the cytoplasmic side; that stretch reads NNAGNAAAAL…GHFQQVLTAI (129 aa). A helical membrane pass occupies residues 248 to 268; the sequence is GNFCICSIAVGMIIEIVVMYP. Over 269 to 277 the chain is Extracellular; the sequence is IQHRAYRPG. Residues 278-295 traverse the membrane as a helical segment; it reads IDNLLVLLIGGIPIAMPT. The Cytoplasmic segment spans residues 296–647; the sequence is VLSVTMAIGS…TSRAIFQRMK (352 aa). Catalysis depends on Asp-333, which acts as the 4-aspartylphosphate intermediate. Positions 592 and 596 each coordinate Mg(2+). The chain crosses the membrane as a helical span at residues 648–669; that stretch reads NYTIYAVSITIRIVLGFMLLAL. Residues 670–674 are Extracellular-facing; sequence IWKFD. The chain crosses the membrane as a helical span at residues 675 to 697; the sequence is FPPFMVLIIAILNDGTIMTISKD. Over 698 to 713 the chain is Cytoplasmic; it reads RVKPSPLPDSWKLSEI. The helical transmembrane segment at 714–734 threads the bilayer; it reads FATGVVFGSYMAMMTVIFFWA. Residues 735 to 759 lie on the Extracellular side of the membrane; the sequence is AYKTDFFPRTFGVSTLEKTAHDDFR. The chain crosses the membrane as a helical span at residues 760-780; sequence KLASAIYLQVSIISQALIFVT. The Cytoplasmic portion of the chain corresponds to 781–792; that stretch reads RSRSWSYVERPG. Residues 793-813 traverse the membrane as a helical segment; that stretch reads MLLVVAFILAQLVATLIAVYA. The Extracellular segment spans residues 814–821; that stretch reads NWSFAAIE. The chain crosses the membrane as a helical span at residues 822-842; sequence GIGWGWAGVIWLYNIVFYIPL. Topologically, residues 843 to 956 are cytoplasmic; it reads DIIKFLIRYA…IETIQQAYTV (114 aa). Thr-889 is modified (phosphothreonine). Residue Ser-938 is modified to Phosphoserine. The interval 954 to 956 is interaction with 14-3-3 proteins; sequence YTV. The residue at position 955 (Thr-955) is a Phosphothreonine.

Belongs to the cation transport ATPase (P-type) (TC 3.A.3) family. Type IIIA subfamily. As to quaternary structure, binds to 14-3-3 proteins. The binding is induced by phosphorylation of Thr-955. Binding to 14-3-3 proteins activates the H(+)-ATPase. In terms of tissue distribution, expressed in guard cells, mesophyll cells, leaves and roots.

It localises to the membrane. The enzyme catalyses ATP + H2O + H(+)(in) = ADP + phosphate + 2 H(+)(out). In terms of biological role, the plasma membrane H(+) ATPase of plants and fungi generates a proton gradient that drives the active transport of nutrients by H(+)-symport. The resulting external acidification and/or internal alkinization may mediate growth responses. The polypeptide is ATPase 11, plasma membrane-type (AHA11) (Arabidopsis thaliana (Mouse-ear cress)).